Reading from the N-terminus, the 480-residue chain is Glutamate--tRNA ligase (480 aa).

The 'HIGH' region motif lies at 9-19 (PSPTGDPHVGT). The 'KMSKS' region signature appears at 253-257 (KISKR). K256 contacts ATP.

Belongs to the class-I aminoacyl-tRNA synthetase family. Glutamate--tRNA ligase type 1 subfamily. As to quaternary structure, monomer.

The protein resides in the cytoplasm. It carries out the reaction tRNA(Glu) + L-glutamate + ATP = L-glutamyl-tRNA(Glu) + AMP + diphosphate. Functionally, catalyzes the attachment of glutamate to tRNA(Glu) in a two-step reaction: glutamate is first activated by ATP to form Glu-AMP and then transferred to the acceptor end of tRNA(Glu). This chain is Glutamate--tRNA ligase, found in Deinococcus geothermalis (strain DSM 11300 / CIP 105573 / AG-3a).